The sequence spans 1060 residues: MPKRQDIHKILVIGSGPIIIGQAAEFDYSGTQACLALREEGYEVVLVNSNPATIMTDTEIADRVYIEPLTVEFVSQILRKELPDAILPTIGGQIGLNLAMKLSNTGILDELGIELLGTKLTAIDQAEDRELFKNLMQKLHEPVPESAIANNIEEAQQFADKIGFPVIIRPAFTMGGTGGGIANNEKELAEIAENGLNLSPVTQVLVERSIAGYKEVEFEVMRDAADSAIVVCNMENFDPVGVHTGDSMVFAPTQTLTDKEVQMLRDAALKIIRALKIEGGCNVQFALDRNSFKYYVIEVNPRVSRSSALASKATGYPIAKMAAKIAVGLHLDEIKNPVTKKTWAEFEPALDYVVTKLPRFPFDKFENGDRTLGTQMKATGEVMAIGRTLEESLLKAVRSLEVGLIHPERPAFAKLSDDELSKQIIQANDERLFYLAEAFRRDYTIEEVAELSKMNPFFLDKIKHIVELERELAAHKADLGLLAEVKRYGFADEEIAKLWGLHADQVRQMRKEQKILPVYKMVDTCAGEFASDTPYYYSTYESSTESVKSDKPSVLVIGSGPIRIGQGVEFDYATVHSVKAIQKAGYEAIIMNSNPETVSTDFSIADKLYFEPLTLEDVLNVIDLEQPEGVIVQFGGQTAINLAEPLANRGIKILGTSVEDLNRAEDRDLFDQVIKSLKLPQPEGGTATDKAGALAVADKIGYPVLVRPSYVLGGRAMEIVHDATELDNYIDRAVSVSHDHPVLIDHYLVGKECEVDCISDGDTVVLPGIMEHIERAGIHSGDSMAVYPPQTFSQDIIDQITDATIKLSRTLNCIGLMNVQFIIHAGKAYVIEVNPRASRTVPFLSKVTNIKLAQVATLAILGLSLKEQGFETGLLPNQSGIHVKSPVFSFSKLNHVDSLLGPEMKSTGEVMGSDTTLAKALYKAFEAAGMHLPQFGRALITVKDADKAEATALAKRFREVGYQLVATSGTAKAFEKTGITVSTIEKLDSGQETILEDIANRKIQLVINTMSADKKVSSDGFRIREAAIEHGVPLMTSLDTAGAILKVLELQAFSISPIKS.

A carboxyphosphate synthetic domain region spans residues 1 to 401 (MPKRQDIHKI…SLLKAVRSLE (401 aa)). ATP is bound by residues Arg-129, Arg-169, Gly-175, Gly-176, Arg-208, Ile-210, Glu-215, Gly-241, Val-242, His-243, Gln-284, and Glu-298. The 195-residue stretch at 133–327 (KNLMQKLHEP…IAKMAAKIAV (195 aa)) folds into the ATP-grasp 1 domain. Gln-284, Glu-298, and Asn-300 together coordinate Mg(2+). Mn(2+) contacts are provided by Gln-284, Glu-298, and Asn-300. The oligomerization domain stretch occupies residues 402-546 (VGLIHPERPA…YSTYESSTES (145 aa)). The interval 547–929 (VKSDKPSVLV…ALYKAFEAAG (383 aa)) is carbamoyl phosphate synthetic domain. One can recognise an ATP-grasp 2 domain in the interval 671-861 (DQVIKSLKLP…LAQVATLAIL (191 aa)). ATP contacts are provided by Arg-707, His-746, Leu-748, Glu-752, Gly-777, Ile-778, His-779, Ser-780, Gln-820, and Glu-832. Mg(2+) contacts are provided by Gln-820, Glu-832, and Asn-834. Gln-820, Glu-832, and Asn-834 together coordinate Mn(2+). Positions 930-1060 (MHLPQFGRAL…QAFSISPIKS (131 aa)) constitute an MGS-like domain. The segment at 930–1060 (MHLPQFGRAL…QAFSISPIKS (131 aa)) is allosteric domain.

It belongs to the CarB family. In terms of assembly, composed of two chains; the small (or glutamine) chain promotes the hydrolysis of glutamine to ammonia, which is used by the large (or ammonia) chain to synthesize carbamoyl phosphate. Tetramer of heterodimers (alpha,beta)4. Requires Mg(2+) as cofactor. Mn(2+) serves as cofactor.

The catalysed reaction is hydrogencarbonate + L-glutamine + 2 ATP + H2O = carbamoyl phosphate + L-glutamate + 2 ADP + phosphate + 2 H(+). It carries out the reaction hydrogencarbonate + NH4(+) + 2 ATP = carbamoyl phosphate + 2 ADP + phosphate + 2 H(+). Its pathway is amino-acid biosynthesis; L-arginine biosynthesis; carbamoyl phosphate from bicarbonate: step 1/1. It functions in the pathway pyrimidine metabolism; UMP biosynthesis via de novo pathway; (S)-dihydroorotate from bicarbonate: step 1/3. Functionally, large subunit of the glutamine-dependent carbamoyl phosphate synthetase (CPSase). CPSase catalyzes the formation of carbamoyl phosphate from the ammonia moiety of glutamine, carbonate, and phosphate donated by ATP, constituting the first step of 2 biosynthetic pathways, one leading to arginine and/or urea and the other to pyrimidine nucleotides. The large subunit (synthetase) binds the substrates ammonia (free or transferred from glutamine from the small subunit), hydrogencarbonate and ATP and carries out an ATP-coupled ligase reaction, activating hydrogencarbonate by forming carboxy phosphate which reacts with ammonia to form carbamoyl phosphate. This is Carbamoyl phosphate synthase large chain from Lacticaseibacillus paracasei (strain ATCC 334 / BCRC 17002 / CCUG 31169 / CIP 107868 / KCTC 3260 / NRRL B-441) (Lactobacillus paracasei).